The following is a 462-amino-acid chain: Tryptophan dimethylallyltransferase ifgA (462 aa).

Residues 83 to 84 (IL) and E92 contribute to the L-tryptophan site. The substrate site is built by R103, K189, and Y191. Y193 and R246 together coordinate L-tryptophan. Residues R259, K261, Y263, Q345, and Y347 each coordinate substrate.

It belongs to the tryptophan dimethylallyltransferase family. Homodimer.

It catalyses the reaction L-tryptophan + dimethylallyl diphosphate = 4-(3-methylbut-2-enyl)-L-tryptophan + diphosphate. It functions in the pathway alkaloid biosynthesis; ergot alkaloid biosynthesis. Its function is as follows. Tryptophan dimethylallyltransferase; part of the gene cluster that mediates the biosynthesis of isofumigaclavines, fungal ergot alkaloids. The tryptophan dimethylallyltransferase ifgA catalyzes the first step of ergot alkaloid biosynthesis by condensing dimethylallyl diphosphate (DMAP) and tryptophan to form 4-dimethylallyl-L-tryptophan. The second step is catalyzed by the methyltransferase ifgB that methylates 4-dimethylallyl-L-tryptophan in the presence of S-adenosyl-L-methionine, resulting in the formation of N-methyl-dimethylallyl-L-tryptophan. The catalase ifgD and the FAD-dependent oxidoreductase ifgC then transform N-methyl-dimethylallyl-L-tryptophan to chanoclavine-I which is further oxidized by ifgE in the presence of NAD(+), resulting in the formation of chanoclavine-I aldehyde. The chanoclavine-I aldehyde reductases ifgG and/or fgaOx3 reduce chanoclavine-I aldehyde to dihydrochanoclavine-I aldehyde that spontaneously dehydrates to form 6,8-dimethyl-6,7-didehydroergoline. The festuclavine dehydrogenases ifgF1 and/or ifgF2 then catalyze the reduction of 6,8-dimethyl-6,7-didehydroergoline to form festuclavine. Hydrolysis of festuclavine by a yet undetermined cytochrome P450 monooxygenase (called ifgH) then leads to the formation of isofumigaclavine B which is in turn acetylated by ifgI to isofumigaclavine A. Penicillium roqueforti has interestingly at least two sets of genes for the consumption of chanoclavine-I aldehyde on three different loci, the OYEs ifgG/fgaOx3 and the festuclavine synthase homologs ifgF1/ifgF2. The reason for the duplication of these genes is unclear, probably to ensure the conversion of chanoclavine-I aldehyde by differential gene expression under various environmental conditions. This Penicillium roqueforti (strain FM164) protein is Tryptophan dimethylallyltransferase ifgA.